A 404-amino-acid chain; its full sequence is Argininosuccinate synthase (404 aa).

Residues alanine 10–serine 18 and alanine 38 contribute to the ATP site. L-citrulline is bound at residue tyrosine 89. ATP is bound at residue glycine 119. Positions 121, 125, and 126 each coordinate L-aspartate. Position 125 (asparagine 125) interacts with L-citrulline. 5 residues coordinate L-citrulline: arginine 129, serine 177, serine 186, glutamate 262, and tyrosine 274.

It belongs to the argininosuccinate synthase family. Type 1 subfamily. Homotetramer.

Its subcellular location is the cytoplasm. The catalysed reaction is L-citrulline + L-aspartate + ATP = 2-(N(omega)-L-arginino)succinate + AMP + diphosphate + H(+). Its pathway is amino-acid biosynthesis; L-arginine biosynthesis; L-arginine from L-ornithine and carbamoyl phosphate: step 2/3. The chain is Argininosuccinate synthase from Prochlorococcus marinus (strain MIT 9515).